The following is a 70-amino-acid chain: NADH-ubiquinone oxidoreductase chain 3 (70 aa).

Residues phenylalanine 42–methionine 62 traverse the membrane as a helical segment.

This sequence belongs to the complex I subunit 3 family.

The protein localises to the mitochondrion membrane. It catalyses the reaction a ubiquinone + NADH + 5 H(+)(in) = a ubiquinol + NAD(+) + 4 H(+)(out). Its function is as follows. Core subunit of the mitochondrial membrane respiratory chain NADH dehydrogenase (Complex I) that is believed to belong to the minimal assembly required for catalysis. Complex I functions in the transfer of electrons from NADH to the respiratory chain. The immediate electron acceptor for the enzyme is believed to be ubiquinone. In Artemia salina (Brine shrimp), this protein is NADH-ubiquinone oxidoreductase chain 3 (ND3).